A 256-amino-acid polypeptide reads, in one-letter code: Pimeloyl-[acyl-carrier protein] methyl ester esterase (256 aa).

Residues 15-242 (HLVLLHGWGL…AAHAPFISHP (228 aa)) form the AB hydrolase-1 domain. Residues W22, 82–83 (SL), and 143–147 (FLALQ) contribute to the substrate site. Residue S82 is the Nucleophile of the active site. Catalysis depends on residues D207 and H235. H235 serves as a coordination point for substrate.

The protein belongs to the AB hydrolase superfamily. Carboxylesterase BioH family. As to quaternary structure, monomer.

It is found in the cytoplasm. It catalyses the reaction 6-carboxyhexanoyl-[ACP] methyl ester + H2O = 6-carboxyhexanoyl-[ACP] + methanol + H(+). The protein operates within cofactor biosynthesis; biotin biosynthesis. In terms of biological role, the physiological role of BioH is to remove the methyl group introduced by BioC when the pimeloyl moiety is complete. It allows to synthesize pimeloyl-ACP via the fatty acid synthetic pathway through the hydrolysis of the ester bonds of pimeloyl-ACP esters. The protein is Pimeloyl-[acyl-carrier protein] methyl ester esterase of Escherichia coli (strain SMS-3-5 / SECEC).